The primary structure comprises 275 residues: Release factor glutamine methyltransferase (275 aa).

S-adenosyl-L-methionine is bound by residues 114–118 (GTGSG), Asp137, Trp165, and Asn180. Substrate is bound at residue 180 to 183 (NPPY).

Belongs to the protein N5-glutamine methyltransferase family. PrmC subfamily.

It carries out the reaction L-glutaminyl-[peptide chain release factor] + S-adenosyl-L-methionine = N(5)-methyl-L-glutaminyl-[peptide chain release factor] + S-adenosyl-L-homocysteine + H(+). In terms of biological role, methylates the class 1 translation termination release factors RF1/PrfA and RF2/PrfB on the glutamine residue of the universally conserved GGQ motif. The protein is Release factor glutamine methyltransferase of Xylella fastidiosa (strain Temecula1 / ATCC 700964).